The chain runs to 437 residues: Glutamyl-tRNA reductase (437 aa).

Substrate-binding positions include 46–49 (TCNR), Ser-97, 102–104 (EEQ), and Gln-108. The Nucleophile role is filled by Cys-47. Residue 177–182 (GAGEMG) participates in NADP(+) binding. Residues 410–437 (NGRVSEGKDAKVEEGKPEVDVQRSKAES) are disordered. The segment covering 414 to 437 (SEGKDAKVEEGKPEVDVQRSKAES) has biased composition (basic and acidic residues).

This sequence belongs to the glutamyl-tRNA reductase family. Homodimer.

It carries out the reaction (S)-4-amino-5-oxopentanoate + tRNA(Glu) + NADP(+) = L-glutamyl-tRNA(Glu) + NADPH + H(+). Its pathway is porphyrin-containing compound metabolism; protoporphyrin-IX biosynthesis; 5-aminolevulinate from L-glutamyl-tRNA(Glu): step 1/2. Catalyzes the NADPH-dependent reduction of glutamyl-tRNA(Glu) to glutamate 1-semialdehyde (GSA). The sequence is that of Glutamyl-tRNA reductase from Archaeoglobus fulgidus (strain ATCC 49558 / DSM 4304 / JCM 9628 / NBRC 100126 / VC-16).